A 232-amino-acid polypeptide reads, in one-letter code: Dehydrin DHN3 (232 aa).

Polar residues predominate over residues 1 to 14 (MSQYQNQYGAQTGM). Disordered stretches follow at residues 1–66 (MSQY…QHRG) and 140–232 (EHHG…CTGH). The segment covering 49–60 (TTGGATGQGHGH) has biased composition (gly residues). The segment covering 140-157 (EHHGDKKGVMDKIKEKIP) has biased composition (basic and acidic residues). The segment covering 159–168 (TEQSRTNTDG) has biased composition (polar residues). Basic and acidic residues predominate over residues 198–223 (EQQDVHHGDEQHGEKKGIMEKIKEKL).

It belongs to the plant dehydrin family.

This is Dehydrin DHN3 (DHN3) from Pisum sativum (Garden pea).